The chain runs to 292 residues: 4-hydroxy-tetrahydrodipicolinate synthase (292 aa).

Threonine 45 lines the pyruvate pocket. Tyrosine 133 functions as the Proton donor/acceptor in the catalytic mechanism. Residue lysine 162 is the Schiff-base intermediate with substrate of the active site. Isoleucine 204 contacts pyruvate.

This sequence belongs to the DapA family. Homotetramer; dimer of dimers.

It localises to the cytoplasm. The catalysed reaction is L-aspartate 4-semialdehyde + pyruvate = (2S,4S)-4-hydroxy-2,3,4,5-tetrahydrodipicolinate + H2O + H(+). It participates in amino-acid biosynthesis; L-lysine biosynthesis via DAP pathway; (S)-tetrahydrodipicolinate from L-aspartate: step 3/4. Catalyzes the condensation of (S)-aspartate-beta-semialdehyde [(S)-ASA] and pyruvate to 4-hydroxy-tetrahydrodipicolinate (HTPA). In Nitratidesulfovibrio vulgaris (strain ATCC 29579 / DSM 644 / CCUG 34227 / NCIMB 8303 / VKM B-1760 / Hildenborough) (Desulfovibrio vulgaris), this protein is 4-hydroxy-tetrahydrodipicolinate synthase.